We begin with the raw amino-acid sequence, 85 residues long: Transcriptional repressor protein KorC (85 aa).

A DNA-binding region (H-T-H motif) is located at residues 28–47 (VLHLAGLTGGQAARILGLGA).

In terms of biological role, acts with KorA as corepressor in the control of the kilC and kilE operons. In Escherichia coli, this protein is Transcriptional repressor protein KorC (korC).